Consider the following 304-residue polypeptide: Aspartate carbamoyltransferase catalytic subunit (304 aa).

Arg-54 and Thr-55 together coordinate carbamoyl phosphate. An L-aspartate-binding site is contributed by Lys-83. Residues Arg-104, His-132, and Gln-135 each contribute to the carbamoyl phosphate site. Residues Arg-165 and Arg-226 each contribute to the L-aspartate site. The carbamoyl phosphate site is built by Leu-265 and Pro-266.

The protein belongs to the aspartate/ornithine carbamoyltransferase superfamily. ATCase family. Heterooligomer of catalytic and regulatory chains.

The catalysed reaction is carbamoyl phosphate + L-aspartate = N-carbamoyl-L-aspartate + phosphate + H(+). It functions in the pathway pyrimidine metabolism; UMP biosynthesis via de novo pathway; (S)-dihydroorotate from bicarbonate: step 2/3. Functionally, catalyzes the condensation of carbamoyl phosphate and aspartate to form carbamoyl aspartate and inorganic phosphate, the committed step in the de novo pyrimidine nucleotide biosynthesis pathway. In Pyrobaculum neutrophilum (strain DSM 2338 / JCM 9278 / NBRC 100436 / V24Sta) (Thermoproteus neutrophilus), this protein is Aspartate carbamoyltransferase catalytic subunit.